A 605-amino-acid chain; its full sequence is Aspartate--tRNA(Asp/Asn) ligase (605 aa).

E183 lines the L-aspartate pocket. The tract at residues 207-210 (QLYK) is aspartate. Residue R229 participates in L-aspartate binding. ATP is bound by residues 229–231 (RDE) and Q238. H456 is a binding site for L-aspartate. An ATP-binding site is contributed by E490. An L-aspartate-binding site is contributed by R497. Residue 542 to 545 (GLDR) participates in ATP binding.

Belongs to the class-II aminoacyl-tRNA synthetase family. Type 1 subfamily. Homodimer.

Its subcellular location is the cytoplasm. It carries out the reaction tRNA(Asx) + L-aspartate + ATP = L-aspartyl-tRNA(Asx) + AMP + diphosphate. Functionally, aspartyl-tRNA synthetase with relaxed tRNA specificity since it is able to aspartylate not only its cognate tRNA(Asp) but also tRNA(Asn). Reaction proceeds in two steps: L-aspartate is first activated by ATP to form Asp-AMP and then transferred to the acceptor end of tRNA(Asp/Asn). The sequence is that of Aspartate--tRNA(Asp/Asn) ligase from Heliobacterium modesticaldum (strain ATCC 51547 / Ice1).